We begin with the raw amino-acid sequence, 90 residues long: DNA-directed RNA polymerase subunit omega (90 aa).

The interval 69–90 (RQEQQEQEAAELAAVSSIAHTR) is disordered.

Belongs to the RNA polymerase subunit omega family. The RNAP catalytic core consists of 2 alpha, 1 beta, 1 beta' and 1 omega subunit. When a sigma factor is associated with the core the holoenzyme is formed, which can initiate transcription.

It carries out the reaction RNA(n) + a ribonucleoside 5'-triphosphate = RNA(n+1) + diphosphate. Functionally, promotes RNA polymerase assembly. Latches the N- and C-terminal regions of the beta' subunit thereby facilitating its interaction with the beta and alpha subunits. The protein is DNA-directed RNA polymerase subunit omega of Vibrio atlanticus (strain LGP32) (Vibrio splendidus (strain Mel32)).